A 360-amino-acid chain; its full sequence is Uroporphyrinogen decarboxylase (360 aa).

Substrate contacts are provided by residues 31–35 (RQAGR), aspartate 81, tyrosine 157, threonine 212, and histidine 333.

Belongs to the uroporphyrinogen decarboxylase family. Homodimer.

The protein resides in the cytoplasm. The enzyme catalyses uroporphyrinogen III + 4 H(+) = coproporphyrinogen III + 4 CO2. The protein operates within porphyrin-containing compound metabolism; protoporphyrin-IX biosynthesis; coproporphyrinogen-III from 5-aminolevulinate: step 4/4. Functionally, catalyzes the decarboxylation of four acetate groups of uroporphyrinogen-III to yield coproporphyrinogen-III. This is Uroporphyrinogen decarboxylase from Herminiimonas arsenicoxydans.